We begin with the raw amino-acid sequence, 370 residues long: Trans-enoyl reductase xenG (370 aa).

A disordered region spans residues 1 to 32 (MASTGLPQLPPSQKAVIQSEKTPGAFEVSENR). NADP(+) contacts are provided by residues 54–57 (CDWK), 177–180 (STAS), 200–203 (SPKN), tyrosine 218, 265–266 (FE), and 356–357 (VS).

The protein belongs to the zinc-containing alcohol dehydrogenase family. Monomer.

It functions in the pathway mycotoxin biosynthesis. In terms of biological role, trans-enoyl reductase; part of the gene cluster that mediates the biosynthesis of xenoacremones such as xenoacremone A, a compound that shows inhibitory activity toward the PI3K/AKT signaling pathway and which has the ability to induce apoptosis of A549 lung cancer cells. Within the pathway, cooperation of the hybrid PKS-NRPS xenE and the trans-acting enoyl reductase xenG is responsible for the formation of the reduced tyrosine-nonaketide derivative. The alpha/beta hydrolase xenA then accelerates intramolecular nucleophilic attack to give a pyrrolidone derivative. Subsequently, three enzymes, xenF, xenD, and xenC, coordinately participate in the conversion to xenoacremone B. XenF catalyzes sigmatropic rearrangement to form an A-ring, which leads to an unusual intermediate with a hexane ring, which is required for the formation of the tricarbocyclic product. Epoxidation catalyzed by xenD and the formation of the paracyclophane ether catalyzed by xenC initiate a spontaneous intramolecular Diels-Alder (IMDA) reaction to yield xenoacremone B. Spontaneous hydration of xenoacremone B leads to the formation of xenoacremone A, which undergoes subsequent methylation to afford xenoacremone C. This Xenoacremonium sinensis (Endophyte fungus) protein is Trans-enoyl reductase xenG.